The primary structure comprises 249 residues: FMN reductase [NAD(P)H] (249 aa).

FMN contacts are provided by residues 11-15, Q67, 134-136, and 173-175; these read HRSIR, PIG, and KPR.

The protein belongs to the flavin oxidoreductase frp family. In terms of assembly, homodimer.

The enzyme catalyses FMNH2 + NADP(+) = FMN + NADPH + 2 H(+). It carries out the reaction FMNH2 + NAD(+) = FMN + NADH + 2 H(+). FMN is a competitive inhibitor of NADH, and therefore leads to the preferential utilization of NADPH. Reduces FMNH(2) to FMN, with NADH or NADPH as reductant. It also reduces nitroaromatic compounds, quinones, chromates and azo dyes. It could supply the reduced form of FMN to luciferase-like protein and contribute to the degradation of aromatic compounds. This Bacillus subtilis (strain 168) protein is FMN reductase [NAD(P)H] (nfrA2).